The following is a 590-amino-acid chain: MEKLSMVTSLLCAITVAVLAVAVVSGEAAVVEHTFVVHEMNATHLCNTTKIYVVNGQFPGPTVDVMEGDTVVVHVINKLPFGLTIHWHGVRQMRSCWADGAGFVTECPIPPGNEHTYRFNVTGQVGTLWWHAHVTCLRATINGAFIVRPRDGKYPFPTPAKDVPIIIGEWWELDLIELDRRMMDGNFDDNPLSATINGKLGDLSNCSRMVEESFILDVKHGESYLLRVINTALFSEYYFRVAGHTFTVVGADGNYLTPFKTDMVTVAPGEAIDVIMVADAPPAHYHMIALANQPPEPDPQIPVFTSRGLVRYAGATANNNGLPVPMPIMPNQHNTMPSYYFHANLTGLAHPERHRVPMHVDERLFVTLGLGSICRGQNTTCKRRRSPETIVVATMNNVSFAHPKTTALLERYYDGTSKGVYTEDFPIRPPRPFNYTNRDLIPPGPLEEALEPTFKATKLKRFKYNTSVEIIFQSTTLMQSDSNPMHLHGYDVFLLAQGLGNFNAKRDVRKFNYHNPQLRNTVQVPRGGWAAIRFVTDNPGMWYLHCHFEFHIIMGMATAFIVEDGPTPETSLPPPPPEFKRCGNNGLSQP.

An N-terminal signal peptide occupies residues 1–28; it reads MEKLSMVTSLLCAITVAVLAVAVVSGEA. Plastocyanin-like domains follow at residues 36–152 and 161–315; these read VVHE…PRDG and KDVP…YAGA. Residues N41 and N47 are each glycosylated (N-linked (GlcNAc...) asparagine). The Cu cation site is built by H86 and H88. The N-linked (GlcNAc...) asparagine glycan is linked to N120. H131 and H133 together coordinate Cu cation. Residues N205, N344, N378, N397, N434, and N465 are each glycosylated (N-linked (GlcNAc...) asparagine). The 143-residue stretch at 424–566 folds into the Plastocyanin-like 3 domain; the sequence is DFPIRPPRPF…ATAFIVEDGP (143 aa). Residues N483, H486, H488, H545, C546, H547, H551, and M556 each contribute to the Cu cation site. The disordered stretch occupies residues 565 to 590; the sequence is GPTPETSLPPPPPEFKRCGNNGLSQP.

Belongs to the multicopper oxidase family. The cofactor is Cu cation.

The protein resides in the secreted. Its subcellular location is the extracellular space. It localises to the apoplast. The enzyme catalyses 4 hydroquinone + O2 = 4 benzosemiquinone + 2 H2O. Lignin degradation and detoxification of lignin-derived products. The protein is Putative laccase-19 (LAC19) of Oryza sativa subsp. indica (Rice).